Consider the following 240-residue polypeptide: Methylthioribulose-1-phosphate dehydratase (240 aa).

Cys-99 contributes to the substrate binding site. Zn(2+)-binding residues include His-116 and His-118. Catalysis depends on Glu-145, which acts as the Proton donor/acceptor. A Zn(2+)-binding site is contributed by His-201.

It belongs to the aldolase class II family. MtnB subfamily. The cofactor is Zn(2+).

The protein localises to the cytoplasm. The enzyme catalyses 5-(methylsulfanyl)-D-ribulose 1-phosphate = 5-methylsulfanyl-2,3-dioxopentyl phosphate + H2O. It participates in amino-acid biosynthesis; L-methionine biosynthesis via salvage pathway; L-methionine from S-methyl-5-thio-alpha-D-ribose 1-phosphate: step 2/6. Its function is as follows. Catalyzes the dehydration of methylthioribulose-1-phosphate (MTRu-1-P) into 2,3-diketo-5-methylthiopentyl-1-phosphate (DK-MTP-1-P). The polypeptide is Methylthioribulose-1-phosphate dehydratase (Paracoccidioides lutzii (strain ATCC MYA-826 / Pb01) (Paracoccidioides brasiliensis)).